Here is a 645-residue protein sequence, read N- to C-terminus: Acetyl-coenzyme A synthetase (645 aa).

CoA-binding positions include 190–193 (RGGK) and T308. ATP-binding positions include 384 to 386 (GEP), 408 to 413 (DTWWQT), D497, and R512. S520 lines the CoA pocket. An ATP-binding site is contributed by R523. V534, H536, and I539 together coordinate Mg(2+). Residue K606 is modified to N6-acetyllysine.

It belongs to the ATP-dependent AMP-binding enzyme family. Requires Mg(2+) as cofactor. In terms of processing, acetylated. Deacetylation by the SIR2-homolog deacetylase activates the enzyme.

It carries out the reaction acetate + ATP + CoA = acetyl-CoA + AMP + diphosphate. Functionally, catalyzes the conversion of acetate into acetyl-CoA (AcCoA), an essential intermediate at the junction of anabolic and catabolic pathways. AcsA undergoes a two-step reaction. In the first half reaction, AcsA combines acetate with ATP to form acetyl-adenylate (AcAMP) intermediate. In the second half reaction, it can then transfer the acetyl group from AcAMP to the sulfhydryl group of CoA, forming the product AcCoA. This chain is Acetyl-coenzyme A synthetase, found in Alcanivorax borkumensis (strain ATCC 700651 / DSM 11573 / NCIMB 13689 / SK2).